Here is a 497-residue protein sequence, read N- to C-terminus: Thiamine transporter 1 (497 aa).

Met1 is modified (N-acetylmethionine). Over 1–28 (MDVPGPVSRRAAAAAATVLLRTARVRRE) the chain is Cytoplasmic. Residues 29 to 46 (CWFLPTALLCAYGFFASL) form a helical membrane-spanning segment. At 47–72 (RPSEPFLTPYLLGPDKNLTEREVFNE) the chain is on the extracellular side. Asn63 carries N-linked (GlcNAc...) asparagine glycosylation. The helical transmembrane segment at 73–91 (IYPVWTYSYLVLLFPVFLA) threads the bilayer. Over 92–99 (TDYLRYKP) the chain is Cytoplasmic. The helical transmembrane segment at 100–118 (VVLLQGLSLIVTWFMLLYA) threads the bilayer. The Extracellular segment spans residues 119–128 (QGLLAIQFLE). The chain crosses the membrane as a helical span at residues 129-149 (FFYGIATATEIAYYSYIYSVV). Residues 150-165 (DLGMYQKVTSYCRSAT) lie on the Cytoplasmic side of the membrane. The helical transmembrane segment at 166 to 185 (LVGFTVGSVLGQILVSVAGW) threads the bilayer. Residues 186–191 (SLFSLN) are Extracellular-facing. A helical membrane pass occupies residues 192 to 208 (VISLTCVSVAFAVAWFL). The Cytoplasmic portion of the chain corresponds to 209–285 (PMPQKSLFFH…LLVLKVLWND (77 aa)). At Ser222 the chain carries Phosphoserine. The helical transmembrane segment at 286–310 (FLMCYSSRPLLCWSVWWALSTCGYF) threads the bilayer. Topologically, residues 311–337 (QVVNYTQGLWEKVMPSRYAAIYNGGVE) are extracellular. A glycan (N-linked (GlcNAc...) asparagine) is linked at Asn314. Residues 338 to 354 (AVSTLLGAVAVFAVGYI) traverse the membrane as a helical segment. The Cytoplasmic segment spans residues 355 to 363 (KISWSTWGE). A helical membrane pass occupies residues 364-380 (MTLSLFSLLIAAAVYIM). Residues 381 to 386 (DTVGNI) are Extracellular-facing. A helical membrane pass occupies residues 387–409 (WVCYASYVVFRIIYMLLITIATF). Residues 410-419 (QIAANLSMER) lie on the Cytoplasmic side of the membrane. A helical transmembrane segment spans residues 420–443 (YALVFGVNTFIALALQTLLTLIVV). Over 444 to 455 (DASGLGLEITTQ) the chain is Extracellular. The chain crosses the membrane as a helical span at residues 456-479 (FLIYASYFALIAVVFLASGAVSVM). Residues 480–497 (KKCRKLEDPQSSSQVTTS) are Cytoplasmic-facing.

Belongs to the reduced folate carrier (RFC) transporter (TC 2.A.48) family. In terms of assembly, interacts with TSPAN1; this interaction increases the stability of SLC19A2. Interacts with TMEM63B. Ubiquitous; most abundant in skeletal and cardiac muscle. Medium expression in placenta, heart, liver and kidney, low in lung.

The protein resides in the cell membrane. It catalyses the reaction thiamine(out) + H(+)(in) = thiamine(in) + H(+)(out). The enzyme catalyses pyridoxine(out) + n H(+)(out) = pyridoxine(in) + n H(+)(in). With respect to regulation, pyridoxine transport is inhibited by carbonyl cyanide p-trifluoromethoxyphenylhydrazone (FCCP) and carbonyl cyanide m-chlorophenylhydrazone (CCCP). In terms of biological role, high-affinity transporter for the intake of thiamine. Mediates H(+)-dependent pyridoxine transport. The polypeptide is Thiamine transporter 1 (SLC19A2) (Homo sapiens (Human)).